We begin with the raw amino-acid sequence, 84 residues long: Metallothionein-like protein 4A (84 aa).

The interval 1–26 (MADTGKGSSVAGCNDSCGCPSPCPGG) is disordered.

This sequence belongs to the metallothionein superfamily. Type 15 family. As to expression, expressed specifically in seeds.

It is found in the cytoplasm. It localises to the nucleus. The protein localises to the cell membrane. Metallothioneins have a high content of cysteine residues that bind various heavy metals. Functions as a metal chelator of copper (Cu) and zinc (Zn). Plays a role in storing and distributing Zn ion in seed. The protein is Metallothionein-like protein 4A (MT4A) of Arabidopsis thaliana (Mouse-ear cress).